The sequence spans 239 residues: Carboxy-S-adenosyl-L-methionine synthase (239 aa).

Residues Y35, 64–66 (GCS), 88–89 (DN), and R195 contribute to the S-adenosyl-L-methionine site.

This sequence belongs to the class I-like SAM-binding methyltransferase superfamily. Cx-SAM synthase family. Homodimer.

It carries out the reaction prephenate + S-adenosyl-L-methionine = carboxy-S-adenosyl-L-methionine + 3-phenylpyruvate + H2O. Its function is as follows. Catalyzes the conversion of S-adenosyl-L-methionine (SAM) to carboxy-S-adenosyl-L-methionine (Cx-SAM). This is Carboxy-S-adenosyl-L-methionine synthase from Helicobacter pylori (strain G27).